A 1357-amino-acid polypeptide reads, in one-letter code: MAYSYTEKKRIRKDFSKLPDVMDVPYLLAIQLDSYREFLQAGATKEQFRDIGLHAAFKSVFPIISYSGNAALEYVGYRLGEPAFDVKECVLRGVTFAVPLRVKVRLIIFDRESSNKAIKDIKEQEVYMGEIPLMTENGTFIINGTERVIVSQLHRSPGVFFDHDRGKTHSSGKLLYSARIIPYRGSWLDFEFDPKDCVFVRIDRRRKLPASVLLRALGYSTEEILNAFYATNVFHIKGETLNLELVPQRLRGEVASIDIKDGSGKVIVEQGRRITARHINQLEKAGVSQLEVPFDYLIGRTIAKAIVHPATGEIIAECNTELTLDLLAKVAKAQVVRIETLYTNDIDCGPFISDTLKIDNTSNQLEALVEIYRMMRPGEPPTKEAAETLFGNLFFSAERYDLSAVGRMKFNRRIGRTEIEGPGVLSKEDIIDVLKTLVDIRNGKGIVDDIDHLGNRRVRCVGEMAENQFRVGLVRVERAVKERLSMAESEGLMPQDLINAKPVAAAIKEFFGSSQLSQFMDQNNPLSEITHKRRVSALGPGGLTRERAGFEVRDVHPTHYGRVCPIETPEGPNIGLINSLATYARTNKYGFLESPYRVVKDSLVTDEIVFLSAIEEADHVIAQASATLNEKGQLVDELVAVRHLNEFTVKAPEDVTLMDVSPKQVVSVAASLIPFLEHDDANRALMGSNMQRQAVPTLRADKPLVGTGMERNVARDSGVCVVARRGGVIDSVDASRVVVRVADDEVETGEAGVDIYNLTKYTRSNQNTCINQRPLVSKGDVVARGDILADGPSTDMGELALGQNMRVAFMPWNGFNFEDSICLSERVVQEDRFTTIHIQELTCVARDTKLGPEEITADIPNVGEAALNKLDEAGIVYVGAEVQAGDILVGKVTPKGETQLTPEEKLLRAIFGEKASDVKDTSLRVPTGTKGTVIDVQVFTRDGVERDSRALSIEKMQLDQIRKDLNEEFRIVEGATFERLRAALVGAKAEGGPALKKGTEITDDYLDGLERGQWFKLRMADDALNEQLEKAQAYISDRRQLLDDKFEDKKRKLQQGDDLAPGVLKIVKVYLAIKRRIQPGDKMAGRHGNKGVVSVIMPVEDMPHDANGTPVDIVLNPLGVPSRMNVGQILETHLGLAAKGLGEKINRMLEEQRKVAELRKFLHEIYNEIGGREENLDELGDNEILALAKNLRGGVPMATPVFDGAKEREIKAMLKLADLPESGQMRLFDGRTGNQFERPTTVGYMYMLKLNHLVDDKMHARSTGSYSLVTQQPLGGKAQFGGQRFGEMEVWALEAYGAAYTLQEMLTVKSDDVNGRTKMYKNIVDGDHRMEAGMPESFNVLIKEIRSLGIDIELETE.

It belongs to the RNA polymerase beta chain family. In terms of assembly, the RNAP catalytic core consists of 2 alpha, 1 beta, 1 beta' and 1 omega subunit. When a sigma factor is associated with the core the holoenzyme is formed, which can initiate transcription.

It carries out the reaction RNA(n) + a ribonucleoside 5'-triphosphate = RNA(n+1) + diphosphate. Functionally, DNA-dependent RNA polymerase catalyzes the transcription of DNA into RNA using the four ribonucleoside triphosphates as substrates. The protein is DNA-directed RNA polymerase subunit beta of Pseudomonas aeruginosa (strain LESB58).